A 145-amino-acid polypeptide reads, in one-letter code: Immune protein Tsi3 (145 aa).

Residues 1–15 (MKTVALILASLALLA) form the signal peptide. The N-palmitoyl cysteine moiety is linked to residue cysteine 16. Residue cysteine 16 is the site of S-diacylglycerol cysteine attachment. The segment at 53 to 85 (FDEGGKLRNPRQLEVQRQDAPPPPDLASRRLGD) is disordered. Glutamate 126 is a binding site for Ca(2+).

In terms of assembly, forms a heterotetramer with Tse3 consisting of two Tse3 dimers and two Tsi3 dimers. Formation of the complex inactivates Tse3 enzymatic activity.

Immunity protein that plays a role in preventing early activation of toxin Tse3. Occupies Tse3 substrate binding site and prevents the substrate from entering. This chain is Immune protein Tsi3, found in Pseudomonas aeruginosa (strain ATCC 15692 / DSM 22644 / CIP 104116 / JCM 14847 / LMG 12228 / 1C / PRS 101 / PAO1).